Consider the following 329-residue polypeptide: Phenylalanine--tRNA ligase alpha subunit (329 aa).

Mg(2+) is bound at residue Glu254.

The protein belongs to the class-II aminoacyl-tRNA synthetase family. Phe-tRNA synthetase alpha subunit type 1 subfamily. In terms of assembly, tetramer of two alpha and two beta subunits. It depends on Mg(2+) as a cofactor.

The protein localises to the cytoplasm. It catalyses the reaction tRNA(Phe) + L-phenylalanine + ATP = L-phenylalanyl-tRNA(Phe) + AMP + diphosphate + H(+). The chain is Phenylalanine--tRNA ligase alpha subunit (pheS) from Haemophilus influenzae (strain ATCC 51907 / DSM 11121 / KW20 / Rd).